A 98-amino-acid chain; its full sequence is Aspartyl/glutamyl-tRNA(Asn/Gln) amidotransferase subunit C (98 aa).

It belongs to the GatC family. In terms of assembly, heterotrimer of A, B and C subunits.

The catalysed reaction is L-glutamyl-tRNA(Gln) + L-glutamine + ATP + H2O = L-glutaminyl-tRNA(Gln) + L-glutamate + ADP + phosphate + H(+). It carries out the reaction L-aspartyl-tRNA(Asn) + L-glutamine + ATP + H2O = L-asparaginyl-tRNA(Asn) + L-glutamate + ADP + phosphate + 2 H(+). Allows the formation of correctly charged Asn-tRNA(Asn) or Gln-tRNA(Gln) through the transamidation of misacylated Asp-tRNA(Asn) or Glu-tRNA(Gln) in organisms which lack either or both of asparaginyl-tRNA or glutaminyl-tRNA synthetases. The reaction takes place in the presence of glutamine and ATP through an activated phospho-Asp-tRNA(Asn) or phospho-Glu-tRNA(Gln). This Acidothermus cellulolyticus (strain ATCC 43068 / DSM 8971 / 11B) protein is Aspartyl/glutamyl-tRNA(Asn/Gln) amidotransferase subunit C.